The following is a 404-amino-acid chain: Propionate kinase (404 aa).

This sequence belongs to the acetokinase family. PduW subfamily.

The protein localises to the cytoplasm. It catalyses the reaction propanoate + ATP = propanoyl phosphate + ADP. It participates in polyol metabolism; 1,2-propanediol degradation. Functionally, works with phosphate acetyltransferase (pta) to capture exogenous propionate and regenerate propionyl-CoA during degradation of 1,2-propanediol (1,2-PD). Expression of a cosmid containing the full 21-gene pdu operon in E.coli allows E.coli to grow on 1,2-propanediol (1,2-PD) with the appearance of bacterial microcompartments (BMC) in its cytoplasm. The chain is Propionate kinase from Citrobacter freundii.